We begin with the raw amino-acid sequence, 258 residues long: Ribosomal RNA small subunit methyltransferase A (258 aa).

The S-adenosyl-L-methionine site is built by His-13, Leu-15, Gly-40, Glu-61, Asp-85, and Asn-106.

The protein belongs to the class I-like SAM-binding methyltransferase superfamily. rRNA adenine N(6)-methyltransferase family. RsmA subfamily.

It is found in the cytoplasm. The enzyme catalyses adenosine(1518)/adenosine(1519) in 16S rRNA + 4 S-adenosyl-L-methionine = N(6)-dimethyladenosine(1518)/N(6)-dimethyladenosine(1519) in 16S rRNA + 4 S-adenosyl-L-homocysteine + 4 H(+). Functionally, specifically dimethylates two adjacent adenosines (A1518 and A1519) in the loop of a conserved hairpin near the 3'-end of 16S rRNA in the 30S particle. May play a critical role in biogenesis of 30S subunits. This is Ribosomal RNA small subunit methyltransferase A from Porphyromonas gingivalis (strain ATCC 33277 / DSM 20709 / CIP 103683 / JCM 12257 / NCTC 11834 / 2561).